The chain runs to 646 residues: uncharacterized protein (646 aa).

Transmembrane regions (helical) follow at residues 20-40 (AYFL…SFIF), 54-74 (LVKT…IFFI), 115-135 (LAAI…FFMI), 154-174 (AFVM…ILSL), 203-223 (TVLS…ANAI), 232-252 (ILIL…VAFF), 285-305 (LFLT…IYMF), 523-543 (GVAL…IVQG), 582-602 (IGFL…FAYA), and 613-633 (FLEA…YYIV).

The protein belongs to the ABC-4 integral membrane protein family.

It localises to the cell membrane. This is an uncharacterized protein from Bacillus subtilis (strain 168).